The chain runs to 332 residues: Succinylglutamate desuccinylase (332 aa).

Zn(2+)-binding residues include H59, E62, and H151. Residue E215 is part of the active site.

Belongs to the AspA/AstE family. Succinylglutamate desuccinylase subfamily. Zn(2+) is required as a cofactor.

It carries out the reaction N-succinyl-L-glutamate + H2O = L-glutamate + succinate. It functions in the pathway amino-acid degradation; L-arginine degradation via AST pathway; L-glutamate and succinate from L-arginine: step 5/5. Functionally, transforms N(2)-succinylglutamate into succinate and glutamate. This is Succinylglutamate desuccinylase from Pseudomonas aeruginosa (strain LESB58).